Here is a 388-residue protein sequence, read N- to C-terminus: MAFQPTPLRVALVAGEPSGDLLGASLLGGLHAQLPASSRYYGIGGPRMTAVDFDAHWPMEKLAVRGYVEALKHIPEILRIRGELKRQLLAEPPDAFIGIDAPDFNFGLEQALRGAGIPTVHFVCPSIWAWRGGRIKKIVKAVDHMLCLFPFEPELLEKAGVAATFVGHPLADEIPLEPDMHGARIALGLPDSGPVIAVLPGSRRSEIELIGPTFFDAMALMQQREPGVRFVVPAATPALRELLQPLVDAHPLLSVTLTEGRAQVAMTAADAILVKSGTVTLEAALLKKPMVISYKVPWLTGQIMRRQGYLPYVGLPNILAGRFVVPELLQHFATPEALADATLTQLRDDANRRTLTGIFTDMHLALRQNTAQRAAEAVARVIDSRKPH.

It belongs to the LpxB family.

The enzyme catalyses a lipid X + a UDP-2-N,3-O-bis[(3R)-3-hydroxyacyl]-alpha-D-glucosamine = a lipid A disaccharide + UDP + H(+). Its pathway is bacterial outer membrane biogenesis; LPS lipid A biosynthesis. Functionally, condensation of UDP-2,3-diacylglucosamine and 2,3-diacylglucosamine-1-phosphate to form lipid A disaccharide, a precursor of lipid A, a phosphorylated glycolipid that anchors the lipopolysaccharide to the outer membrane of the cell. In Burkholderia thailandensis (strain ATCC 700388 / DSM 13276 / CCUG 48851 / CIP 106301 / E264), this protein is Lipid-A-disaccharide synthase.